A 243-amino-acid polypeptide reads, in one-letter code: DNA repair protein RecO (243 aa).

Belongs to the RecO family.

Involved in DNA repair and RecF pathway recombination. The polypeptide is DNA repair protein RecO (Vibrio vulnificus (strain CMCP6)).